Consider the following 445-residue polypeptide: Branched-chain amino acid permease BraB (445 aa).

12 helical membrane passes run 11-31 (IIIG…IYPP), 45-65 (IGGF…AIAL), 79-99 (PVFG…LFAI), 122-142 (LSLL…ALNP), 158-178 (FTII…GLGA), 192-212 (FLEG…VVVV), 233-253 (AGVI…YLGA), 275-295 (YLFG…ACLT), 311-331 (LIPA…SLII), 339-359 (IIAF…VIIV), 375-395 (IACL…AAGF), and 415-435 (IGWV…TLFI).

Belongs to the branched chain amino acid transporter family.

The protein resides in the cell membrane. Its function is as follows. Branched-chain amino acid transport system which is involved in the uptake of isoleucine, valine and probably leucine. Together with BcaP and BrnQ, plays an important role in the activation of CodY, a branched-chain amino acid-responsive transcriptional regulator that controls the expression of several dozen transcription units in B.subtilis. The polypeptide is Branched-chain amino acid permease BraB (Bacillus subtilis (strain 168)).